The following is a 492-amino-acid chain: 2-succinylbenzoate--CoA ligase (492 aa).

Belongs to the ATP-dependent AMP-binding enzyme family. MenE subfamily.

The enzyme catalyses 2-succinylbenzoate + ATP + CoA = 2-succinylbenzoyl-CoA + AMP + diphosphate. The protein operates within quinol/quinone metabolism; 1,4-dihydroxy-2-naphthoate biosynthesis; 1,4-dihydroxy-2-naphthoate from chorismate: step 5/7. Its pathway is quinol/quinone metabolism; menaquinone biosynthesis. Functionally, converts 2-succinylbenzoate (OSB) to 2-succinylbenzoyl-CoA (OSB-CoA). The protein is 2-succinylbenzoate--CoA ligase of Staphylococcus aureus (strain Mu3 / ATCC 700698).